Here is a 1594-residue protein sequence, read N- to C-terminus: MGTISSVLQWSCTKCNTINPTESLKCFNCGTVRKVFPQQQQQQHRSSSITASWTADDALEQEQAEKGQERDKEKGRAAVARSEYKHVYKSLLRGCLKRPQRNSQNLPANCVDCEDTRKYIKSSIELYRHFSNPALNRRWVCHACGTDNSSVTWHCLICDTVSYLAPIYKDAIAADRGQDLAGSLGNRGELLAADHSHPHHHHHYLHQELEEQHQHQLHSQHLHKRHLKGRSASGSGSGPGSGSGLRRTQSLSTAIDKSASGRSCHICYANNQSKDIFNLPQIKPAPQLTGIPPVAACSNSRFAIANDTFCRRKQNNNNKNQNHKVVRESGAKRKYNFTITTLSRSAAKDAGHGQMKPLRQVVNLNLNLQQEPQQKSPANPQQLQRKTQREPAAVSMNPTQFTIPRNGVFIAVNEWSEPMASSSSVSSSSNHHHHHHSNSNSNSSGNSNIINNNSSSSSGSNKLYENECVALAQQQLRAAAAQAAQAAATAVAIASSPSAKAMAEPAPTATMPIYAQVNKQHKLKKKQQIASESQTNNNTGSGEIADAVSESLTAGLGTSTDGSGEASESESQVEEHSIYAKVWKGPRKATESKIMHDPGSSSRLSGAASAAAGTASAGAIAAAVGAAAASRHDNKTQLGNGSRSKMWICIKCSYAYNRLWLQTCEMCEAKAEQQQQQLQLQQQQQQQQQHHHHHLQQQQAEAPRDEPWTCKKCTLVNYSTAMACVVCGGSKLKSISSIEDMTLRKGEFWTCSHCTLKNSLHSPVCSACKSHRQPQLSMAMEAVRERPDGQSYEEQDAAAVGGGGGSAHQSGANEVKAPTALNLPLTSVALPMPMLQLPTSTAAGLRGSRSPSPRMQLLPSLQQQRNSSSSGAIPKRHSTGGSIVPRNISIAGLANYNLQQGQGVGSASVVSASGAGSGAGAVGASTSTKKWQCPACTYDNCAASVVCDICSSPRGLASAVLGEALGRKSVRVALTPADIRQESKLMENLRQLEETEALTKWQNIIQYCRDNSELFVDDSFPPAPKSLYYNPASGAGEGNPVVQWRRPHEINCDGGAYPPWAVFRTPLPSDICQGVLGNCWLLSALAVLAEREDLVKEVLVTKEICGQGAYQVRLCKDGKWTTVLVDDLLPCDKRGHLVYSQAKRKQLWVPLIEKAVAKIHGCYEALVSGRAIEGLATLTGAPCESIPLQASSLPMPSEDELDKDLIWAQLLSSRCVRFLMGASCGGGNMKVDEEEYQQKGLRPRHAYSVLDVKDIQGHRLLKLRNPWGHYSWRGDWSDDSSLWTDDLRDALMPHGASEGVFWISFEDVLNYFDCIDICKVRSGWNEVRLQGTLQPLCSISCVLLTVLEPTEAEFTLFQEGQRNSEKSQRSQLDLCVVIFRTRSPAAPEIGRLVEHSKRQVRGFVGCHKMLERDIYLLVCLAFNHWHTGIEDPHQYPQCILAIHSSKRLLVEQISPSPHLLADAIISLTLTKGQRHEGREGMTAYYLTKGWAGLVVMVENRHENKWIHVKCDCQESYNVVSTRGELKTVDSVPPLQRQVIIVLTQLEGSGGFSIAHRLTHRLANSRGLHDWGPPGATHCPPIENVHGLHAPRLIT.

2 consecutive RanBP2-type zinc fingers follow at residues M1 to V35 and L135 to L164. Disordered stretches follow at residues E210–D256, E371–Q400, A420–G459, K524–E543, and A554–G606. A compositionally biased stretch (basic residues) spans H215–G229. Polar residues-rich tracts occupy residues R246–I255 and E371–R385. A Phosphoserine modification is found at S250. The segment covering N438–G459 has biased composition (low complexity). Residues Q528–S541 are compositionally biased toward polar residues. The RanBP2-type 3 zinc finger occupies R643–Q673. The disordered stretch occupies residues Q684–P703. RanBP2-type zinc fingers lie at residues R704–K733 and R744–P774. Disordered stretches follow at residues R786–G811 and S860–V884. The span at S860–G871 shows a compositional bias: polar residues. The RanBP2-type 6 zinc-finger motif lies at S927–L956. The Calpain catalytic domain occupies L1014 to R1321. Catalysis depends on residues C1079, H1245, and N1265.

The protein belongs to the peptidase C2 family.

Has a role in eye development. Its function is as follows. Calcium-regulated non-lysosomal thiol-protease. The chain is Calpain-D (sol) from Drosophila melanogaster (Fruit fly).